The sequence spans 124 residues: U-scoloptoxin-Er5d (124 aa).

A signal peptide spans methionine 1–glycine 22. The propeptide occupies glutamate 23 to arginine 94. RLWRNWE repeat units follow at residues arginine 34–glutamate 40, arginine 61–glutamate 67, and arginine 86–glutamate 92. Glutamine 95 is modified (pyrrolidone carboxylic acid). The RLWRNWE 4; approximate repeat unit spans residues glutamate 107–glutamate 113. Positions tryptophan 112–glutamate 124 are excised as a propeptide.

The protein belongs to the scoloptoxin-08 family. As to expression, expressed by the venom gland.

The protein localises to the secreted. This is U-scoloptoxin-Er5d from Ethmostigmus rubripes (Giant centipede).